The chain runs to 617 residues: Dihydroxy-acid dehydratase (617 aa).

Asp81 lines the Mg(2+) pocket. Residue Cys122 coordinates [2Fe-2S] cluster. Residues Asp123 and Lys124 each coordinate Mg(2+). Lys124 carries the N6-carboxylysine modification. Cys195 serves as a coordination point for [2Fe-2S] cluster. Residue Glu491 participates in Mg(2+) binding. The Proton acceptor role is filled by Ser517.

This sequence belongs to the IlvD/Edd family. Homodimer. [2Fe-2S] cluster serves as cofactor. Requires Mg(2+) as cofactor.

The catalysed reaction is (2R)-2,3-dihydroxy-3-methylbutanoate = 3-methyl-2-oxobutanoate + H2O. The enzyme catalyses (2R,3R)-2,3-dihydroxy-3-methylpentanoate = (S)-3-methyl-2-oxopentanoate + H2O. Its pathway is amino-acid biosynthesis; L-isoleucine biosynthesis; L-isoleucine from 2-oxobutanoate: step 3/4. The protein operates within amino-acid biosynthesis; L-valine biosynthesis; L-valine from pyruvate: step 3/4. Functionally, functions in the biosynthesis of branched-chain amino acids. Catalyzes the dehydration of (2R,3R)-2,3-dihydroxy-3-methylpentanoate (2,3-dihydroxy-3-methylvalerate) into 2-oxo-3-methylpentanoate (2-oxo-3-methylvalerate) and of (2R)-2,3-dihydroxy-3-methylbutanoate (2,3-dihydroxyisovalerate) into 2-oxo-3-methylbutanoate (2-oxoisovalerate), the penultimate precursor to L-isoleucine and L-valine, respectively. The polypeptide is Dihydroxy-acid dehydratase (Buchnera aphidicola subsp. Schizaphis graminum (strain Sg)).